Here is a 349-residue protein sequence, read N- to C-terminus: Nitrilase, bromoxynil-specific (349 aa).

Positions 5–274 constitute a CN hydrolase domain; it reads FKAAAVQAEP…EGIVYAEIDL (270 aa). The Proton acceptor role is filled by Glu-45. Lys-127 (proton donor) is an active-site residue. Cys-161 (nucleophile) is an active-site residue.

It belongs to the carbon-nitrogen hydrolase superfamily. Nitrilase family. As to quaternary structure, homodimer.

It carries out the reaction a nitrile + 2 H2O = a carboxylate + NH4(+). Functionally, specific for the herbicide bromoxynil (3,5-dibromo-4-hydroxybenzonitrile); converts it to its metabolite 3,5-dibromo-4-hydroxybenzoic acid. In Klebsiella pneumoniae subsp. ozaenae, this protein is Nitrilase, bromoxynil-specific (bxn).